The chain runs to 141 residues: Nucleoside diphosphate kinase (141 aa).

ATP-binding residues include lysine 9, phenylalanine 57, arginine 85, threonine 91, arginine 102, and asparagine 112. Catalysis depends on histidine 115, which acts as the Pros-phosphohistidine intermediate.

The protein belongs to the NDK family. In terms of assembly, homotetramer. It depends on Mg(2+) as a cofactor.

It is found in the cytoplasm. The enzyme catalyses a 2'-deoxyribonucleoside 5'-diphosphate + ATP = a 2'-deoxyribonucleoside 5'-triphosphate + ADP. The catalysed reaction is a ribonucleoside 5'-diphosphate + ATP = a ribonucleoside 5'-triphosphate + ADP. Major role in the synthesis of nucleoside triphosphates other than ATP. The ATP gamma phosphate is transferred to the NDP beta phosphate via a ping-pong mechanism, using a phosphorylated active-site intermediate. This is Nucleoside diphosphate kinase from Chlamydia trachomatis serovar L2 (strain ATCC VR-902B / DSM 19102 / 434/Bu).